The sequence spans 208 residues: Outer-membrane lipoprotein LolB (208 aa).

An N-terminal signal peptide occupies residues 1 to 21; it reads MLSSKRRLMRLLPLASLLLTA. Residue cysteine 22 is the site of N-palmitoyl cysteine attachment. Cysteine 22 is lipidated: S-diacylglycerol cysteine.

This sequence belongs to the LolB family. As to quaternary structure, monomer.

The protein localises to the cell outer membrane. Plays a critical role in the incorporation of lipoproteins in the outer membrane after they are released by the LolA protein. In Erwinia tasmaniensis (strain DSM 17950 / CFBP 7177 / CIP 109463 / NCPPB 4357 / Et1/99), this protein is Outer-membrane lipoprotein LolB.